The following is a 260-amino-acid chain: Indole-3-glycerol phosphate synthase (260 aa).

The protein belongs to the TrpC family.

The enzyme catalyses 1-(2-carboxyphenylamino)-1-deoxy-D-ribulose 5-phosphate + H(+) = (1S,2R)-1-C-(indol-3-yl)glycerol 3-phosphate + CO2 + H2O. It functions in the pathway amino-acid biosynthesis; L-tryptophan biosynthesis; L-tryptophan from chorismate: step 4/5. The protein is Indole-3-glycerol phosphate synthase of Neisseria meningitidis serogroup B (strain ATCC BAA-335 / MC58).